The primary structure comprises 425 residues: Serine--tRNA ligase (425 aa).

230-232 (TAE) is an L-serine binding site. Residue 261–263 (RSE) coordinates ATP. An L-serine-binding site is contributed by glutamate 284. 348-351 (EISS) contributes to the ATP binding site. L-serine is bound at residue serine 384.

Belongs to the class-II aminoacyl-tRNA synthetase family. Type-1 seryl-tRNA synthetase subfamily. Homodimer. The tRNA molecule binds across the dimer.

It localises to the cytoplasm. The catalysed reaction is tRNA(Ser) + L-serine + ATP = L-seryl-tRNA(Ser) + AMP + diphosphate + H(+). The enzyme catalyses tRNA(Sec) + L-serine + ATP = L-seryl-tRNA(Sec) + AMP + diphosphate + H(+). It participates in aminoacyl-tRNA biosynthesis; selenocysteinyl-tRNA(Sec) biosynthesis; L-seryl-tRNA(Sec) from L-serine and tRNA(Sec): step 1/1. In terms of biological role, catalyzes the attachment of serine to tRNA(Ser). Is also able to aminoacylate tRNA(Sec) with serine, to form the misacylated tRNA L-seryl-tRNA(Sec), which will be further converted into selenocysteinyl-tRNA(Sec). This chain is Serine--tRNA ligase, found in Streptococcus pyogenes serotype M5 (strain Manfredo).